The chain runs to 242 residues: UPF0309 protein BOV_A0853 (242 aa).

Positions 30 to 209 (AADLIAAAAR…FADVAARLVG (180 aa)) constitute an SIS domain.

The protein belongs to the UPF0309 family.

This is UPF0309 protein BOV_A0853 from Brucella ovis (strain ATCC 25840 / 63/290 / NCTC 10512).